Here is a 336-residue protein sequence, read N- to C-terminus: Peroxidase 20 (336 aa).

Positions 1 to 24 (MEIKQKKVWLSLIVLYAITTSVLG) are cleaved as a signal peptide. Intrachain disulfides connect cysteine 39–cysteine 119, cysteine 72–cysteine 77, cysteine 125–cysteine 331, and cysteine 204–cysteine 239. Catalysis depends on histidine 70, which acts as the Proton acceptor. Positions 71, 74, 76, 78, and 80 each coordinate Ca(2+). Proline 167 is a substrate binding site. Asparagine 170 carries N-linked (GlcNAc...) asparagine glycosylation. Position 197 (histidine 197) interacts with heme b. Threonine 198 provides a ligand contact to Ca(2+). Ca(2+) contacts are provided by aspartate 252, threonine 255, and aspartate 260.

This sequence belongs to the peroxidase family. Classical plant (class III) peroxidase subfamily. It depends on heme b as a cofactor. The cofactor is Ca(2+).

It localises to the secreted. The catalysed reaction is 2 a phenolic donor + H2O2 = 2 a phenolic radical donor + 2 H2O. Functionally, removal of H(2)O(2), oxidation of toxic reductants, biosynthesis and degradation of lignin, suberization, auxin catabolism, response to environmental stresses such as wounding, pathogen attack and oxidative stress. These functions might be dependent on each isozyme/isoform in each plant tissue. In terms of biological role, may be implicated in the systemic acquired resistance response via the salicylic acid signal transduction pathway. The chain is Peroxidase 20 (PER20) from Arabidopsis thaliana (Mouse-ear cress).